The following is a 549-amino-acid chain: Cation/acetate symporter ActP (549 aa).

The next 13 helical transmembrane spans lie at Trp-33–Ala-53, Gly-76–Val-96, Gly-103–Glu-123, Leu-149–Ala-169, Ile-183–Ala-203, Trp-206–Val-226, Ile-262–Leu-282, Gly-303–Val-323, Leu-355–Leu-375, Val-404–Glu-424, Ile-428–Leu-448, Ile-463–Trp-483, and Ile-493–Phe-513.

This sequence belongs to the sodium:solute symporter (SSF) (TC 2.A.21) family.

It localises to the cell inner membrane. In terms of biological role, transports acetate. The chain is Cation/acetate symporter ActP from Enterobacter sp. (strain 638).